The sequence spans 114 residues: rRNA-processing protein cgrA (114 aa).

Residues 1–13 (MSSAAPAPSTHAA) show a composition bias toward low complexity. Disordered regions lie at residues 1–47 (MSSA…AARK) and 77–114 (RRAAKEEKERYEKMAEKMHRKRVERLKKREKRNKLLNS). Residues 40-101 (TKRAAARKEQ…EKMHRKRVER (62 aa)) are a coiled coil. Over residues 77 to 93 (RRAAKEEKERYEKMAEK) the composition is skewed to basic and acidic residues. Positions 94-114 (MHRKRVERLKKREKRNKLLNS) are enriched in basic residues.

Belongs to the CGR1 family.

Its subcellular location is the nucleus. The protein resides in the nucleolus. Its function is as follows. Involved in nucleolar integrity and required for processing of the pre-rRNA for the 60S ribosome subunit. This Emericella nidulans (strain FGSC A4 / ATCC 38163 / CBS 112.46 / NRRL 194 / M139) (Aspergillus nidulans) protein is rRNA-processing protein cgrA (cgrA).